Reading from the N-terminus, the 476-residue chain is tRNA(Ile)-lysidine synthase (476 aa).

30-35 serves as a coordination point for ATP; the sequence is SGGPDS.

This sequence belongs to the tRNA(Ile)-lysidine synthase family.

It localises to the cytoplasm. It carries out the reaction cytidine(34) in tRNA(Ile2) + L-lysine + ATP = lysidine(34) in tRNA(Ile2) + AMP + diphosphate + H(+). Its function is as follows. Ligates lysine onto the cytidine present at position 34 of the AUA codon-specific tRNA(Ile) that contains the anticodon CAU, in an ATP-dependent manner. Cytidine is converted to lysidine, thus changing the amino acid specificity of the tRNA from methionine to isoleucine. The chain is tRNA(Ile)-lysidine synthase from Bacillus cereus (strain ZK / E33L).